We begin with the raw amino-acid sequence, 543 residues long: Excitatory amino acid transporter 1 (543 aa).

At 1-47 the chain is on the cytoplasmic side; the sequence is MTKSNGEDPRAGSRMERFQQGVRQRTLLAKKKVQNITKDDVKGFLKR. The chain crosses the membrane as a helical span at residues 48–68; it reads NGFVLFTVIAVVVGSILGFSV. The Extracellular segment spans residues 69 to 86; the sequence is RSYHMTFRELKYFSFPGE. A helical membrane pass occupies residues 87 to 108; it reads LLMRMLQMLVLPLIVSSLVTGM. Residues 109–122 lie on the Cytoplasmic side of the membrane; sequence AALDSKASGKMGLR. The chain crosses the membrane as a helical span at residues 123–145; the sequence is AVVYYMTTTVIAVFIGIVIVIIV. The Extracellular portion of the chain corresponds to 146–237; that stretch reads HPGKGTKEHM…MREEMIPVPG (92 aa). N-linked (GlcNAc...) asparagine glycans are attached at residues Asn206 and Asn217. Residues 238-261 traverse the membrane as a helical segment; sequence AVNGVNALGLVVFSMCFGLVIGNM. Residues 262-270 lie on the Cytoplasmic side of the membrane; that stretch reads KEQGKALKD. The chain crosses the membrane as a helical span at residues 271-298; the sequence is FFDSLNEAIMRLVAVIMWYAPIGILFLI. The Extracellular segment spans residues 299-319; the sequence is AGKIAEMEDMGVVGGQLGMYT. A helical transmembrane segment spans residues 320–341; the sequence is VTVIIGLLIHAVIVLPLLYFAV. Topologically, residues 342–346 are cytoplasmic; the sequence is TRKNP. The discontinuously helical intramembrane region spans 347 to 377; the sequence is WVFIGGILQALITALGTSSSSATLPITFKCL. 364 to 366 lines the L-aspartate pocket; that stretch reads SSS. The Cytoplasmic portion of the chain corresponds to 378-386; the sequence is EENNKVDKR. Residues 387–413 traverse the membrane as a helical segment; the sequence is VTRFVLPVGATINMDGTALYEALAAIF. The Na(+) site is built by Gly395, Thr397, and Asn399. Thr403 contacts L-aspartate. The Extracellular segment spans residues 414 to 426; that stretch reads IAQVNNYDLNFGQ. The segment at residues 427–460 is an intramembrane region (discontinuously helical); it reads ILTISITATAASIGAAGIPQAGLVTMVIVLTSVG. 444-448 is an L-aspartate binding site; it reads IPQAG. Residues 461–473 are Extracellular-facing; sequence LPTDDITLIIAVD. The chain crosses the membrane as a helical span at residues 474–495; the sequence is WFLDRLRTTTNVLGDSLGAGIV. Residues Asp477 and Asn484 each coordinate L-aspartate. The Na(+) site is built by Asn484 and Asp488. Residues 496-543 lie on the Cytoplasmic side of the membrane; it reads EHLSRHELQSGDAEMGNSVIEENEMKKPYQLVSQENELEKPIDSETKM. The tract at residues 521-543 is disordered; sequence KKPYQLVSQENELEKPIDSETKM. The span at 532–543 shows a compositional bias: basic and acidic residues; the sequence is ELEKPIDSETKM.

It belongs to the dicarboxylate/amino acid:cation symporter (DAACS) (TC 2.A.23) family. In terms of assembly, homotrimer. In terms of tissue distribution, detected in retina (at protein level).

It localises to the cell membrane. It carries out the reaction K(+)(in) + L-glutamate(out) + 3 Na(+)(out) + H(+)(out) = K(+)(out) + L-glutamate(in) + 3 Na(+)(in) + H(+)(in). It catalyses the reaction K(+)(in) + L-aspartate(out) + 3 Na(+)(out) + H(+)(out) = K(+)(out) + L-aspartate(in) + 3 Na(+)(in) + H(+)(in). The enzyme catalyses D-aspartate(out) + K(+)(in) + 3 Na(+)(out) + H(+)(out) = D-aspartate(in) + K(+)(out) + 3 Na(+)(in) + H(+)(in). Its function is as follows. Sodium-dependent, high-affinity amino acid transporter that mediates the uptake of L-glutamate and also L-aspartate and D-aspartate. Functions as a symporter that transports one amino acid molecule together with two or three Na(+) ions and one proton, in parallel with the counter-transport of one K(+) ion. Plays a redundant role in the rapid removal of released glutamate from the synaptic cleft, which is essential for terminating the postsynaptic action of glutamate. This Ambystoma tigrinum (Eastern tiger salamander) protein is Excitatory amino acid transporter 1 (SLC1A3).